Consider the following 381-residue polypeptide: Meiotic recombination protein SPO11-1 (381 aa).

Residues Glu-23–Leu-162 enclose the Topo IIA-type catalytic domain. Tyr-123 acts as the O-(5'-phospho-DNA)-tyrosine intermediate in catalysis. Residues Glu-209 and Asp-261 each contribute to the Mg(2+) site.

The protein belongs to the TOP6A family. It depends on Mg(2+) as a cofactor. As to expression, highly expressed in flowers before pollination. Expressed in roots and shoots.

The protein localises to the nucleus. The enzyme catalyses ATP-dependent breakage, passage and rejoining of double-stranded DNA.. Its function is as follows. Required for meiotic recombination. Mediates DNA cleavage that forms the double-strand breaks (DSB) that initiate meiotic recombination. May be involved in plant growth and development, and stress tolerance. The protein is Meiotic recombination protein SPO11-1 (SPO11-1) of Oryza sativa subsp. indica (Rice).